Consider the following 870-residue polypeptide: Probable inorganic carbon transporter subunit DabA (870 aa).

Residues Cys381, Asp383, His564, and Cys579 each coordinate Zn(2+).

This sequence belongs to the inorganic carbon transporter (TC 9.A.2) DabA family. Forms a complex with DabB. Zn(2+) serves as cofactor.

Its subcellular location is the cell membrane. In terms of biological role, part of an energy-coupled inorganic carbon pump. The sequence is that of Probable inorganic carbon transporter subunit DabA from Geobacillus kaustophilus (strain HTA426).